Reading from the N-terminus, the 557-residue chain is Leucine-rich glioma-inactivated protein 1 (557 aa).

The N-terminal stretch at 1-34 is a signal peptide; that stretch reads MESERSKRMGNACIPLKRIAYFLCLLSALLLTEG. The region spanning 35–72 is the LRRNT domain; that stretch reads KKPAKPKCPAVCTCTKDNALCENARSIPRTVPPDVISL. LRR repeat units follow at residues 92–113, 116–137, and 140–161; these read SLQL…AFIG, HLEY…TFRG, and SLIH…IFKG. In terms of domain architecture, LRRCT spans 173–223; the sequence is NSFNCDCKLKWLVEWLGHTNATVEDIYCEGPPEYKKRKINSLSSKDFDCII. N-linked (GlcNAc...) asparagine glycosylation is present at Asn-192. 7 EAR repeats span residues 225–267, 271–313, 317–364, 366–415, 419–462, 464–506, and 510–552; these read EFAK…EWDH, TFRN…KRDS, KFIK…KWNG, GFYS…QWNK, LFTN…KWGG, SFQD…NWDA, and KFVK…KHVI. Residue Asn-277 is glycosylated (N-linked (GlcNAc...) asparagine). Asn-422 is a glycosylation site (N-linked (GlcNAc...) asparagine).

Oligomer. Interacts with KCNA1 within a complex containing KCNA1, KCNA4 and KCNAB1. Part of a complex containing ADAM22, DLG4/PSD95 and CACNG2/Stargazin. Can bind to ADAM11 and ADAM23. Glycosylated. Predominantly expressed in neural tissues, especially in brain. Expression is reduced in low-grade brain tumors and significantly reduced or absent in malignant gliomas. In terms of tissue distribution, expressed in the occipital cortex and hippocampus; higher amounts are observed in the parietal and frontal cortices, putamen, and, particularly, in the temporal neocortex, where it is between 3 and 5 times more abundant than in the hippocampus (at protein level). Expression is absent in the cerebellum. As to expression, abundantly expressed in the occipital cortex and weakly expressed in the hippocampus (at protein level).

The protein resides in the secreted. It localises to the synapse. Its subcellular location is the cytoplasm. It is found in the golgi apparatus. The protein localises to the endoplasmic reticulum. Regulates voltage-gated potassium channels assembled from KCNA1, KCNA4 and KCNAB1. It slows down channel inactivation by precluding channel closure mediated by the KCNAB1 subunit. Ligand for ADAM22 that positively regulates synaptic transmission mediated by AMPA-type glutamate receptors. Plays a role in suppressing the production of MMP1/3 through the phosphatidylinositol 3-kinase/ERK pathway. May play a role in the control of neuroblastoma cell survival. In Homo sapiens (Human), this protein is Leucine-rich glioma-inactivated protein 1 (LGI1).